A 318-amino-acid polypeptide reads, in one-letter code: Putative 2-hydroxyacid dehydrogenase SSP0606 (318 aa).

NAD(+)-binding positions include 156 to 157 (EI), 235 to 237 (ASR), and aspartate 261. Arginine 237 is a catalytic residue. Glutamate 266 is an active-site residue. Histidine 284 functions as the Proton donor in the catalytic mechanism. 284–287 (HIGN) contacts NAD(+).

This sequence belongs to the D-isomer specific 2-hydroxyacid dehydrogenase family.

The protein is Putative 2-hydroxyacid dehydrogenase SSP0606 of Staphylococcus saprophyticus subsp. saprophyticus (strain ATCC 15305 / DSM 20229 / NCIMB 8711 / NCTC 7292 / S-41).